The primary structure comprises 464 residues: Argininosuccinate lyase (464 aa).

Belongs to the lyase 1 family. Argininosuccinate lyase subfamily.

The protein localises to the cytoplasm. The catalysed reaction is 2-(N(omega)-L-arginino)succinate = fumarate + L-arginine. The protein operates within amino-acid biosynthesis; L-arginine biosynthesis; L-arginine from L-ornithine and carbamoyl phosphate: step 3/3. This is Argininosuccinate lyase from Pseudomonas savastanoi pv. phaseolicola (strain 1448A / Race 6) (Pseudomonas syringae pv. phaseolicola (strain 1448A / Race 6)).